Reading from the N-terminus, the 88-residue chain is Acylphosphatase (88 aa).

The region spanning 3–88 (RLVALVKGRV…EAGLKGFHVY (86 aa)) is the Acylphosphatase-like domain. Residues arginine 18 and asparagine 36 contribute to the active site.

It belongs to the acylphosphatase family.

It catalyses the reaction an acyl phosphate + H2O = a carboxylate + phosphate + H(+). This chain is Acylphosphatase (acyP), found in Thermus thermophilus (strain ATCC BAA-163 / DSM 7039 / HB27).